We begin with the raw amino-acid sequence, 156 residues long: SCP2 sterol-binding domain-containing protein 1 (156 aa).

An SCP2 domain is found at 44-156 (TVPVFEDISQ…ERVFKDWAKW (113 aa)).

The polypeptide is SCP2 sterol-binding domain-containing protein 1 (SCP2D1) (Bos taurus (Bovine)).